A 258-amino-acid chain; its full sequence is Putative ankyrin repeat domain-containing protein 30B-like (258 aa).

Positions 1 to 21 (MERLSAAPVKGQTGPERPSPF) are disordered. ANK repeat units lie at residues 71–100 (KKRT…QLDV), 104–133 (ENRT…DPNI), 137–166 (YGNT…DIEV), and 170–199 (AGHT…NANA). Residues 216–258 (KISKNSQNSNPEGTSEGTPDEAAPLAERTPDTAESLVERTPDE) form a disordered region. A compositionally biased stretch (polar residues) spans 218–232 (SKNSQNSNPEGTSEG). A compositionally biased stretch (basic and acidic residues) spans 243 to 258 (RTPDTAESLVERTPDE).

The chain is Putative ankyrin repeat domain-containing protein 30B-like (ANKRD30BL) from Homo sapiens (Human).